The chain runs to 356 residues: Photosystem II protein D1 (356 aa).

3 helical membrane-spanning segments follow: residues 29 to 46 (YVGWFGTLMIPTLLTATT), 118 to 133 (HFLIGIFCYMGRQWEL), and 142 to 156 (WICVAYSAPVSAATA). A chlorophyll a-binding site is contributed by His118. Tyr126 serves as a coordination point for pheophytin a. The [CaMn4O5] cluster site is built by Asp170 and Glu189. The helical transmembrane segment at 197 to 218 (FHMLGVAGVFGGSLFSAMHGSL) threads the bilayer. Position 198 (His198) interacts with chlorophyll a. A quinone is bound by residues His215 and 264–265 (SF). His215 contributes to the Fe cation binding site. His272 lines the Fe cation pocket. Residues 274–288 (FLGAWPVIGIWFTAM) traverse the membrane as a helical segment. The [CaMn4O5] cluster site is built by His332, Glu333, Asp342, and Ala344. A propeptide spanning residues 345–356 (SAEPVSAPVING) is cleaved from the precursor.

The protein belongs to the reaction center PufL/M/PsbA/D family. PSII is composed of 1 copy each of membrane proteins PsbA, PsbB, PsbC, PsbD, PsbE, PsbF, PsbH, PsbI, PsbJ, PsbK, PsbL, PsbM, PsbT, PsbX, PsbY, PsbZ, Psb30/Ycf12, peripheral proteins PsbO, CyanoQ (PsbQ), PsbU, PsbV and a large number of cofactors. It forms dimeric complexes. The D1/D2 heterodimer binds P680, chlorophylls that are the primary electron donor of PSII, and subsequent electron acceptors. It shares a non-heme iron and each subunit binds pheophytin, quinone, additional chlorophylls, carotenoids and lipids. D1 provides most of the ligands for the Mn4-Ca-O5 cluster of the oxygen-evolving complex (OEC). There is also a Cl(-1) ion associated with D1 and D2, which is required for oxygen evolution. The PSII complex binds additional chlorophylls, carotenoids and specific lipids. serves as cofactor. Tyr-161 forms a radical intermediate that is referred to as redox-active TyrZ, YZ or Y-Z. Post-translationally, C-terminally processed by CtpA; processing is essential to allow assembly of the oxygen-evolving complex and thus photosynthetic growth.

It localises to the cellular thylakoid membrane. It catalyses the reaction 2 a plastoquinone + 4 hnu + 2 H2O = 2 a plastoquinol + O2. Functionally, photosystem II (PSII) is a light-driven water:plastoquinone oxidoreductase that uses light energy to abstract electrons from H(2)O, generating O(2) and a proton gradient subsequently used for ATP formation. It consists of a core antenna complex that captures photons, and an electron transfer chain that converts photonic excitation into a charge separation. The D1/D2 (PsbA/PsbD) reaction center heterodimer binds P680, the primary electron donor of PSII as well as several subsequent electron acceptors. This chain is Photosystem II protein D1, found in Crocosphaera subtropica (strain ATCC 51142 / BH68) (Cyanothece sp. (strain ATCC 51142)).